Reading from the N-terminus, the 328-residue chain is Biotin synthase (328 aa).

In terms of domain architecture, Radical SAM core spans 50–277; the sequence is FGDQVHLCCI…GKEIVICGGR (228 aa). [4Fe-4S] cluster contacts are provided by cysteine 67, cysteine 71, and cysteine 74. Residues serine 111, cysteine 142, and cysteine 202 each coordinate [2Fe-2S] cluster.

This sequence belongs to the radical SAM superfamily. Biotin synthase family. In terms of assembly, homodimer. [4Fe-4S] cluster serves as cofactor. Requires [2Fe-2S] cluster as cofactor.

It carries out the reaction (4R,5S)-dethiobiotin + (sulfur carrier)-SH + 2 reduced [2Fe-2S]-[ferredoxin] + 2 S-adenosyl-L-methionine = (sulfur carrier)-H + biotin + 2 5'-deoxyadenosine + 2 L-methionine + 2 oxidized [2Fe-2S]-[ferredoxin]. Its pathway is cofactor biosynthesis; biotin biosynthesis; biotin from 7,8-diaminononanoate: step 2/2. Catalyzes the conversion of dethiobiotin (DTB) to biotin by the insertion of a sulfur atom into dethiobiotin via a radical-based mechanism. The protein is Biotin synthase of Desulfatibacillum aliphaticivorans.